The following is a 915-amino-acid chain: Probable serine/threonine-protein kinase dyrk2 (915 aa).

4 stretches are compositionally biased toward low complexity: residues 51-79, 108-119, 170-185, and 196-218; these read TSNT…PTIS, SSSKSSSNSSSI, SSSS…STTS, and SSNS…SGSS. 3 disordered regions span residues 51 to 119, 132 to 334, and 349 to 533; these read TSNT…SSSI, FSSS…SKSS, and AIKS…PTKS. Positions 234-260 are enriched in polar residues; sequence PSHTISDSPRSSTMKSRSVSISNGSLF. 6 stretches are compositionally biased toward low complexity: residues 261–287, 300–333, 352–364, 379–391, 399–425, and 433–533; these read SPTN…SSIS, SSST…PSKS, SRSL…LARV, SSSS…SFSS, SSSK…ASKI, and SLSS…PTKS. A Protein kinase domain is found at 605-902; sequence FEIVSILGQG…AEQGLKHDWI (298 aa). ATP is bound by residues 611-619 and Lys-634; that span reads LGQGSFCQV. Asp-731 functions as the Proton acceptor in the catalytic mechanism.

This sequence belongs to the protein kinase superfamily. CMGC Ser/Thr protein kinase family. MNB/DYRK subfamily.

It carries out the reaction L-seryl-[protein] + ATP = O-phospho-L-seryl-[protein] + ADP + H(+). It catalyses the reaction L-threonyl-[protein] + ATP = O-phospho-L-threonyl-[protein] + ADP + H(+). The enzyme catalyses L-tyrosyl-[protein] + ATP = O-phospho-L-tyrosyl-[protein] + ADP + H(+). The chain is Probable serine/threonine-protein kinase dyrk2 (dyrk2) from Dictyostelium discoideum (Social amoeba).